We begin with the raw amino-acid sequence, 253 residues long: Acetylglutamate kinase (253 aa).

Substrate-binding positions include 40–41 (GG), arginine 62, and asparagine 154.

It belongs to the acetylglutamate kinase family. ArgB subfamily.

It is found in the cytoplasm. The enzyme catalyses N-acetyl-L-glutamate + ATP = N-acetyl-L-glutamyl 5-phosphate + ADP. It participates in amino-acid biosynthesis; L-arginine biosynthesis; N(2)-acetyl-L-ornithine from L-glutamate: step 2/4. In terms of biological role, catalyzes the ATP-dependent phosphorylation of N-acetyl-L-glutamate. This Staphylococcus saprophyticus subsp. saprophyticus (strain ATCC 15305 / DSM 20229 / NCIMB 8711 / NCTC 7292 / S-41) protein is Acetylglutamate kinase.